The following is an 84-amino-acid chain: RNA-binding protein Hfq (84 aa).

One can recognise a Sm domain in the interval 11 to 71; it reads DTFLNHVRKN…ISTIMPGHPV (61 aa).

It belongs to the Hfq family. As to quaternary structure, homohexamer.

RNA chaperone that binds small regulatory RNA (sRNAs) and mRNAs to facilitate mRNA translational regulation in response to envelope stress, environmental stress and changes in metabolite concentrations. Also binds with high specificity to tRNAs. The protein is RNA-binding protein Hfq of Methylorubrum populi (strain ATCC BAA-705 / NCIMB 13946 / BJ001) (Methylobacterium populi).